Reading from the N-terminus, the 445-residue chain is Transcriptional enhancer factor TEF-4 (445 aa).

Disordered stretches follow at residues 1-47 (MGDP…VWSP) and 191-217 (PPAS…SPPA). The span at 25-37 (EGTGGSEGVGGDG) shows a compositional bias: gly residues. Residues 38-114 (SPDAEGVWSP…QVLARRKSRE (77 aa)) constitute a DNA-binding region (TEA). The tract at residues 172–445 (WNVPDVKPFS…QYHIYRLVRD (274 aa)) is transcriptional activation. Over residues 199–216 (YEPPPALSPLPPPAPSPP) the composition is skewed to pro residues.

As to quaternary structure, interacts with YAP1 and WWTR1/TAZ. As to expression, highest expression in brain. High levels also found in lung, testis and ovarian follicle cells. Lower levels in heart and spleen.

It is found in the nucleus. Transcription factor which plays a key role in the Hippo signaling pathway, a pathway involved in organ size control and tumor suppression by restricting proliferation and promoting apoptosis. The core of this pathway is composed of a kinase cascade wherein MST1/MST2, in complex with its regulatory protein SAV1, phosphorylates and activates LATS1/2 in complex with its regulatory protein MOB1, which in turn phosphorylates and inactivates YAP1 oncoprotein and WWTR1/TAZ. Acts by mediating gene expression of YAP1 and WWTR1/TAZ, thereby regulating cell proliferation, migration and epithelial mesenchymal transition (EMT) induction. Binds to the SPH and GT-IIC 'enhansons' (5'-GTGGAATGT-3'). May be involved in the gene regulation of neural development. Binds to the M-CAT motif. This chain is Transcriptional enhancer factor TEF-4 (Tead2), found in Mus musculus (Mouse).